The chain runs to 763 residues: Translation initiation factor IF-2, chloroplastic (763 aa).

3 disordered regions span residues 1–22 (MFLN…NNSS), 52–122 (IDKS…SNSA), and 149–168 (NNKI…DQSI). Residues 13–22 (SSYSTNNNSS) are compositionally biased toward low complexity. Over residues 73–92 (RIDKKNKNFNKAHDLLDNKK) the composition is skewed to basic and acidic residues. The span at 93 to 104 (NKNRQRKKIKNK) shows a compositional bias: basic residues. Positions 151-168 (KIPQQKKQQVASSIDQSI) are enriched in polar residues. The 169-residue stretch at 261–429 (NRPPVVTILG…ILLLAELENL (169 aa)) folds into the tr-type G domain. GTP is bound by residues 270–277 (GHVDHGKT), 316–320 (DTPGH), and 370–373 (SKID).

The protein belongs to the TRAFAC class translation factor GTPase superfamily. Classic translation factor GTPase family. IF-2 subfamily.

The protein resides in the plastid. The protein localises to the chloroplast. Functionally, one of the essential components for the initiation of protein synthesis. Protects formylmethionyl-tRNA from spontaneous hydrolysis and promotes its binding to the 30S ribosomal subunits. Also involved in the hydrolysis of GTP during the formation of the 70S ribosomal complex. The protein is Translation initiation factor IF-2, chloroplastic (infB) of Porphyra purpurea (Red seaweed).